We begin with the raw amino-acid sequence, 511 residues long: ATP synthase subunit alpha (511 aa).

An ATP-binding site is contributed by 169 to 176 (GDRQTGKT).

The protein belongs to the ATPase alpha/beta chains family. As to quaternary structure, F-type ATPases have 2 components, CF(1) - the catalytic core - and CF(0) - the membrane proton channel. CF(1) has five subunits: alpha(3), beta(3), gamma(1), delta(1), epsilon(1). CF(0) has three main subunits: a(1), b(2) and c(9-12). The alpha and beta chains form an alternating ring which encloses part of the gamma chain. CF(1) is attached to CF(0) by a central stalk formed by the gamma and epsilon chains, while a peripheral stalk is formed by the delta and b chains.

The protein localises to the cell inner membrane. The catalysed reaction is ATP + H2O + 4 H(+)(in) = ADP + phosphate + 5 H(+)(out). Its function is as follows. Produces ATP from ADP in the presence of a proton gradient across the membrane. The alpha chain is a regulatory subunit. The sequence is that of ATP synthase subunit alpha from Bartonella henselae (strain ATCC 49882 / DSM 28221 / CCUG 30454 / Houston 1) (Rochalimaea henselae).